The chain runs to 442 residues: Histidine--tRNA ligase (442 aa).

The protein belongs to the class-II aminoacyl-tRNA synthetase family. Homodimer.

Its subcellular location is the cytoplasm. It catalyses the reaction tRNA(His) + L-histidine + ATP = L-histidyl-tRNA(His) + AMP + diphosphate + H(+). This is Histidine--tRNA ligase from Psychrobacter arcticus (strain DSM 17307 / VKM B-2377 / 273-4).